The chain runs to 119 residues: Small ribosomal subunit protein bS16 (119 aa).

Belongs to the bacterial ribosomal protein bS16 family.

The protein is Small ribosomal subunit protein bS16 of Amoebophilus asiaticus (strain 5a2).